Here is a 269-residue protein sequence, read N- to C-terminus: Cbp/p300-interacting transactivator 2 (269 aa).

A disordered region spans residues 142–200 (AGHQMNGTNQHFRDCNPKHSGGSSTPGGAGGSGTPGGSGGTSGGAGGSSAGGSGGGSTM). A compositionally biased stretch (gly residues) spans 165–198 (STPGGAGGSGTPGGSGGTSGGAGGSSAGGSGGGS).

The protein belongs to the CITED family. As to quaternary structure, interacts (via C-terminus) with EP300 (via CH1 domain); the interaction is stimulated in response to hypoxia. Interacts with PPARA. Interacts (via C-terminus) with TFAP2A, TFAP2B and TFAP2C. Interacts (via C-terminus) with SMAD2. Interacts (via C-terminus) with SMAD3 (via MH2 domain). Interacts with LHX2 (via LIM domains). Interacts with WT1 isoform 1 and isoform 3. As to expression, ubiquitous.

Its subcellular location is the nucleus. Its function is as follows. Transcriptional coactivator of the p300/CBP-mediated transcription complex. Acts as a bridge, linking TFAP2 transcription factors and the p300/CBP transcriptional coactivator complex in order to stimulate TFAP2-mediated transcriptional activation. Positively regulates TGF-beta signaling through its association with the SMAD/p300/CBP-mediated transcriptional coactivator complex. Stimulates the peroxisome proliferator-activated receptors PPARA transcriptional activity. Enhances estrogen-dependent transactivation mediated by estrogen receptors. Also acts as a transcriptional corepressor; interferes with the binding of the transcription factors HIF1A or STAT2 and the p300/CBP transcriptional coactivator complex. Participates in sex determination and early gonad development by stimulating transcription activation of SRY. Plays a role in controlling left-right patterning during embryogenesis; potentiates transcriptional activation of NODAL-mediated gene transcription in the left lateral plate mesoderm (LPM). Plays an essential role in differentiation of the adrenal cortex from the adrenogonadal primordium (AGP); stimulates WT1-mediated transcription activation thereby up-regulating the nuclear hormone receptor NR5A1 promoter activity. Associates with chromatin to the PITX2 P1 promoter region. The protein is Cbp/p300-interacting transactivator 2 (Cited2) of Mus musculus (Mouse).